An 895-amino-acid chain; its full sequence is Protein translocase subunit SecA (895 aa).

ATP contacts are provided by residues Gln87, 105 to 109 (GEGKT), and Asp512. The span at 833–852 (TQEEVEQAERQRQEMAKRET) shows a compositional bias: basic and acidic residues. The disordered stretch occupies residues 833–895 (TQEEVEQAER…KHCHGSKAKY (63 aa)). Cys877, Cys879, Cys888, and His889 together coordinate Zn(2+). The segment covering 883 to 895 (KKYKHCHGSKAKY) has biased composition (basic residues).

This sequence belongs to the SecA family. Monomer and homodimer. Part of the essential Sec protein translocation apparatus which comprises SecA, SecYEG and auxiliary proteins SecDF-YajC and YidC. Zn(2+) serves as cofactor.

Its subcellular location is the cell inner membrane. It is found in the cytoplasm. It catalyses the reaction ATP + H2O + cellular proteinSide 1 = ADP + phosphate + cellular proteinSide 2.. In terms of biological role, part of the Sec protein translocase complex. Interacts with the SecYEG preprotein conducting channel. Has a central role in coupling the hydrolysis of ATP to the transfer of proteins into and across the cell membrane, serving both as a receptor for the preprotein-SecB complex and as an ATP-driven molecular motor driving the stepwise translocation of polypeptide chains across the membrane. The sequence is that of Protein translocase subunit SecA from Pasteurella multocida (strain Pm70).